Reading from the N-terminus, the 460-residue chain is MGKEKLHVNVVVIGHVDSGKSTTTGHLIYKCGGIDKRTIEKFEKEAAELGKGSFKYAWVLDKLKAERERGITIDIALWKFETPKYMVTVIDAPGHRDFIKNMITGTSQADCAILTIAGGTGEFEAGISKDGQTREHALLAFTLGVRQLIVAVNKMDTTKWSEDRFNEIVKETSTFIKKVGYNPKTVAFVPISGWHGDNMLEESTNMPWYKGWTKETKAGVVKGKTLLDAIDAIEPPVRPSDKPLRLPLQDVYKIGGIGTVPVGRVETGIIKAGMVVTFAPSNVTTEVKSVEMHHEQLAEGKPGDNVGFNVKNVSVKDIRRGNVASDSKNDPAKEAASFNAQVIVLNHPGQIGAGYAPVLDCHTAHIACKFAELLEKIDRRTGKSLEASPKFVKSGDACIVKLVPSKPMCVESYNEYPPLGRFAVRDMRQTVAVGIIKSVDKTDKSGGKVTKSAEKAAKKK.

A N,N,N-trimethylglycine modification is found at G2. N6,N6-dimethyllysine; alternate is present on K3. Residue K3 is modified to N6-methyllysine; alternate. A tr-type G domain is found at K5–S240. The interval G14–S21 is G1. G14–S21 is a GTP binding site. Residue K30 is modified to N6-methyllysine. A G2 region spans residues G70–D74. K79 is subject to N6,N6,N6-trimethyllysine. Positions D91–G94 are G3. Residues D91 to H95 and N153 to D156 each bind GTP. A G4 region spans residues N153–D156. Residues S192–W194 form a G5 region. K316 bears the N6,N6-dimethyllysine; alternate mark. Position 316 is an N6-methyllysine; alternate (K316). K390 bears the N6-methyllysine mark.

It belongs to the TRAFAC class translation factor GTPase superfamily. Classic translation factor GTPase family. EF-Tu/EF-1A subfamily.

Its subcellular location is the cytoplasm. In terms of biological role, this protein promotes the GTP-dependent binding of aminoacyl-tRNA to the A-site of ribosomes during protein biosynthesis. The polypeptide is Elongation factor 1-alpha (TEF1) (Schizophyllum commune (Split gill fungus)).